Here is a 469-residue protein sequence, read N- to C-terminus: Citrate synthase, mitochondrial (469 aa).

A mitochondrion-targeting transit peptide spans 1 to 30 (MSFLSVSRLAPKLLNSKNATYFLVAARNAS). Residues His-304 and His-350 contribute to the active site. Residue Arg-359 coordinates oxaloacetate. Asp-405 is an active-site residue. 2 residues coordinate oxaloacetate: Arg-431 and Arg-451.

Belongs to the citrate synthase family. In terms of assembly, homodimer.

The protein resides in the mitochondrion matrix. It carries out the reaction oxaloacetate + acetyl-CoA + H2O = citrate + CoA + H(+). The protein operates within carbohydrate metabolism; tricarboxylic acid cycle; isocitrate from oxaloacetate: step 1/2. Functionally, key enzyme of the Krebs tricarboxylic acid cycle which catalyzes the synthesis of citrate from acetyl coenzyme A and oxaloacetate. In Thunnus albacares (Yellowfin tuna), this protein is Citrate synthase, mitochondrial (cs).